The following is a 333-amino-acid chain: Putative fimbrium anchoring subunit Fim4B (333 aa).

The first 20 residues, 1-20 (MRNTRYGFLVLLSSLLMLTG), serve as a signal peptide directing secretion. The N-palmitoyl cysteine moiety is linked to residue Cys21. The S-diacylglycerol cysteine moiety is linked to residue Cys21. Positions 274–333 (ENAGTGEDGKPTPPPEIELPPDDKIEVDKPETPPNPDGGGGMGGNVDGWGPEDNVELPVN) are disordered. The span at 294–304 (PDDKIEVDKPE) shows a compositional bias: basic and acidic residues. Gly residues predominate over residues 310 to 320 (DGGGGMGGNVD).

This sequence belongs to the bacteroidetes fimbrillin superfamily. FimB/Mfa2 family.

It localises to the cell outer membrane. Putative fimbrium anchoring subunit. The chain is Putative fimbrium anchoring subunit Fim4B from Bacteroides ovatus (strain ATCC 8483 / DSM 1896 / JCM 5824 / BCRC 10623 / CCUG 4943 / NCTC 11153).